A 285-amino-acid chain; its full sequence is MTEKIILPSPAKLNLFLYITNKRADGYHELQTLFQFLDFGDDISLEVNESGEIELLNAIEGVAKEQNLIYRAAKLLQNHTACSKGAKIGVTKRLPMGGGVGGGSSNAATVLVGLNHFWQTGLSLEQLAELGLSLGADVPIFVRGFAAFAEGVGEKLVACQPRESWYVVLKPNVSISTAAVFQDPNLPRNTPKRTLSRLLSEEWTNDCEKVVRDHYFEVEDLIAELLQYATFRLTGTGACIFAEFESEAEAKAVFAHKPHNIFGFIAKGQNRSPLHQMLNLTTSPQ.

Lys-12 is a catalytic residue. An ATP-binding site is contributed by 95–105 (PMGGGVGGGSS). The active site involves Asp-137.

The protein belongs to the GHMP kinase family. IspE subfamily.

It catalyses the reaction 4-CDP-2-C-methyl-D-erythritol + ATP = 4-CDP-2-C-methyl-D-erythritol 2-phosphate + ADP + H(+). Its pathway is isoprenoid biosynthesis; isopentenyl diphosphate biosynthesis via DXP pathway; isopentenyl diphosphate from 1-deoxy-D-xylulose 5-phosphate: step 3/6. Its function is as follows. Catalyzes the phosphorylation of the position 2 hydroxy group of 4-diphosphocytidyl-2C-methyl-D-erythritol. The protein is 4-diphosphocytidyl-2-C-methyl-D-erythritol kinase of Actinobacillus pleuropneumoniae serotype 5b (strain L20).